A 242-amino-acid chain; its full sequence is Type III pantothenate kinase (242 aa).

5-12 (DLGNTRLK) provides a ligand contact to ATP. Residues Y94 and 100-103 (GCDR) each bind substrate. The Proton acceptor role is filled by D102. T124 is an ATP binding site. Residue T175 participates in substrate binding.

It belongs to the type III pantothenate kinase family. As to quaternary structure, homodimer. NH4(+) is required as a cofactor. The cofactor is K(+).

It is found in the cytoplasm. It carries out the reaction (R)-pantothenate + ATP = (R)-4'-phosphopantothenate + ADP + H(+). It functions in the pathway cofactor biosynthesis; coenzyme A biosynthesis; CoA from (R)-pantothenate: step 1/5. Catalyzes the phosphorylation of pantothenate (Pan), the first step in CoA biosynthesis. This Psychrobacter cryohalolentis (strain ATCC BAA-1226 / DSM 17306 / VKM B-2378 / K5) protein is Type III pantothenate kinase.